Here is a 353-residue protein sequence, read N- to C-terminus: Photosystem II protein D1 (353 aa).

The residue at position 2 (threonine 2) is an N-acetylthreonine. The residue at position 2 (threonine 2) is a Phosphothreonine. Transmembrane regions (helical) follow at residues 29-46, 118-133, and 142-156; these read YIGW…TATS, HFLL…EWEL, and WIAV…AATA. Histidine 118 serves as a coordination point for chlorophyll a. Tyrosine 126 contacts pheophytin a. [CaMn4O5] cluster contacts are provided by aspartate 170 and glutamate 189. A helical transmembrane segment spans residues 197–218; sequence FHMLGVAGVFGGSLFSAMHGSL. A chlorophyll a-binding site is contributed by histidine 198. A quinone-binding positions include histidine 215 and 264–265; that span reads SF. A Fe cation-binding site is contributed by histidine 215. Histidine 272 contacts Fe cation. A helical membrane pass occupies residues 274–288; that stretch reads FLAAWPVVGIWFTAL. Histidine 332, glutamate 333, aspartate 342, and alanine 344 together coordinate [CaMn4O5] cluster. Positions 345-353 are excised as a propeptide; the sequence is AVEAPSTNG.

It belongs to the reaction center PufL/M/PsbA/D family. In terms of assembly, PSII is composed of 1 copy each of membrane proteins PsbA, PsbB, PsbC, PsbD, PsbE, PsbF, PsbH, PsbI, PsbJ, PsbK, PsbL, PsbM, PsbT, PsbX, PsbY, PsbZ, Psb30/Ycf12, at least 3 peripheral proteins of the oxygen-evolving complex and a large number of cofactors. It forms dimeric complexes. It depends on The D1/D2 heterodimer binds P680, chlorophylls that are the primary electron donor of PSII, and subsequent electron acceptors. It shares a non-heme iron and each subunit binds pheophytin, quinone, additional chlorophylls, carotenoids and lipids. D1 provides most of the ligands for the Mn4-Ca-O5 cluster of the oxygen-evolving complex (OEC). There is also a Cl(-1) ion associated with D1 and D2, which is required for oxygen evolution. The PSII complex binds additional chlorophylls, carotenoids and specific lipids. as a cofactor. Tyr-161 forms a radical intermediate that is referred to as redox-active TyrZ, YZ or Y-Z. Post-translationally, C-terminally processed by CTPA; processing is essential to allow assembly of the oxygen-evolving complex and thus photosynthetic growth.

The protein resides in the plastid. It localises to the chloroplast thylakoid membrane. The catalysed reaction is 2 a plastoquinone + 4 hnu + 2 H2O = 2 a plastoquinol + O2. In terms of biological role, photosystem II (PSII) is a light-driven water:plastoquinone oxidoreductase that uses light energy to abstract electrons from H(2)O, generating O(2) and a proton gradient subsequently used for ATP formation. It consists of a core antenna complex that captures photons, and an electron transfer chain that converts photonic excitation into a charge separation. The D1/D2 (PsbA/PsbD) reaction center heterodimer binds P680, the primary electron donor of PSII as well as several subsequent electron acceptors. This Nymphaea alba (White water-lily) protein is Photosystem II protein D1.